The chain runs to 218 residues: Imidazole glycerol phosphate synthase subunit HisH (218 aa).

A Glutamine amidotransferase type-1 domain is found at 12–218 (SIVVVDYGLG…RNFVDYCADQ (207 aa)). Cys88 functions as the Nucleophile in the catalytic mechanism. Active-site residues include His196 and Glu198.

As to quaternary structure, heterodimer of HisH and HisF.

The protein resides in the cytoplasm. It catalyses the reaction 5-[(5-phospho-1-deoxy-D-ribulos-1-ylimino)methylamino]-1-(5-phospho-beta-D-ribosyl)imidazole-4-carboxamide + L-glutamine = D-erythro-1-(imidazol-4-yl)glycerol 3-phosphate + 5-amino-1-(5-phospho-beta-D-ribosyl)imidazole-4-carboxamide + L-glutamate + H(+). It carries out the reaction L-glutamine + H2O = L-glutamate + NH4(+). It participates in amino-acid biosynthesis; L-histidine biosynthesis; L-histidine from 5-phospho-alpha-D-ribose 1-diphosphate: step 5/9. Its function is as follows. IGPS catalyzes the conversion of PRFAR and glutamine to IGP, AICAR and glutamate. The HisH subunit catalyzes the hydrolysis of glutamine to glutamate and ammonia as part of the synthesis of IGP and AICAR. The resulting ammonia molecule is channeled to the active site of HisF. The sequence is that of Imidazole glycerol phosphate synthase subunit HisH from Halobacterium salinarum (strain ATCC 700922 / JCM 11081 / NRC-1) (Halobacterium halobium).